The following is a 116-amino-acid chain: NADH-ubiquinone oxidoreductase chain 3 (116 aa).

3 helical membrane-spanning segments follow: residues 3–23 (LVIS…VVSF), 56–76 (FFLV…LLAL), and 85–105 (ATGT…GLIY).

It belongs to the complex I subunit 3 family.

It is found in the mitochondrion membrane. The enzyme catalyses a ubiquinone + NADH + 5 H(+)(in) = a ubiquinol + NAD(+) + 4 H(+)(out). Functionally, core subunit of the mitochondrial membrane respiratory chain NADH dehydrogenase (Complex I) that is believed to belong to the minimal assembly required for catalysis. Complex I functions in the transfer of electrons from NADH to the respiratory chain. The immediate electron acceptor for the enzyme is believed to be ubiquinone. The protein is NADH-ubiquinone oxidoreductase chain 3 (MT-ND3) of Formosania lacustris (Oriental stream loach).